Consider the following 491-residue polypeptide: Ligand-gated ion channel 50 (491 aa).

An N-terminal signal peptide occupies residues Met-1–Thr-19. Asn-55 and Asn-101 each carry an N-linked (GlcNAc...) asparagine glycan. Cysteines 157 and 171 form a disulfide. The next 3 membrane-spanning stretches (helical) occupy residues Leu-241–Phe-261, Ser-265–Val-287, and Val-302–Cys-322. Asn-418 carries N-linked (GlcNAc...) asparagine glycosylation. The chain crosses the membrane as a helical span at residues Met-465–Met-485.

Belongs to the ligand-gated ion channel (TC 1.A.9) family.

It localises to the postsynaptic cell membrane. The protein resides in the cell membrane. This is Ligand-gated ion channel 50 (lgc-50) from Caenorhabditis elegans.